Reading from the N-terminus, the 390-residue chain is MLSRKGIIPEEYVLTRLAEDPAEPRYRTRERRARFVSKKGNCNVAHKNIREQGRFLQDVFTTLVDLKWPHTLLIFTMSFLCSWLLFAMVWWLIAFAHGDLAPGEGTNVPCVTSIHSFSSAFLFSIEVQVTIGFGGRMVTEECPLAILILIVQNIVGLMINAIMLGCIFMKTAQAHRRAETLIFSKHAVITLRHGRLCFMLRVGDLRKSMIISATIHMQVVRKTTSPEGEVVPLHQVDIPMENGVGGNGIFLVAPLIIYHVIDSNSPLYDLAPSDLHHHQDLEIIVILEGVVETTGITTQARTSYLADEILWGQRFVPIVAEEDGRYSVDYSKFGNTIKVPTPLCTARQLDEDRSLLDALTLASSRGPLRKRSVAVAKAKPKFSISPDSLS.

Over 1–65 the chain is Cytoplasmic; sequence MLSRKGIIPE…LQDVFTTLVD (65 aa). Positions 48 and 50 each coordinate ATP. A helical transmembrane segment spans residues 66–92; it reads LKWPHTLLIFTMSFLCSWLLFAMVWWL. Topologically, residues 93 to 116 are extracellular; that stretch reads IAFAHGDLAPGEGTNVPCVTSIHS. Cysteines 110 and 142 form a disulfide. An intramembrane region (discontinuously helical; Pore-forming) is located at residues 117 to 133; it reads FSSAFLFSIEVQVTIGF. Thr130 and Phe133 together coordinate K(+). Residues 130–135 carry the Selectivity filter motif; it reads TIGFGG. Residues 134–142 are Extracellular-facing; it reads GGRMVTEEC. The chain crosses the membrane as a helical span at residues 143 to 171; that stretch reads PLAILILIVQNIVGLMINAIMLGCIFMKT. Topologically, residues 172–390 are cytoplasmic; the sequence is AQAHRRAETL…KFSISPDSLS (219 aa). Residue Arg176 participates in a 1,2-diacyl-sn-glycero-3-phospho-(1D-myo-inositol-4,5-bisphosphate) binding. Residue Tyr330 coordinates ATP. Thr341 carries the post-translational modification Phosphothreonine; by MAPK1. Ser385 carries the phosphoserine; by MAPK1 modification.

The protein belongs to the inward rectifier-type potassium channel (TC 1.A.2.1) family. KCNJ11 subfamily. In terms of assembly, homotetramer; the homotetramer binds four ATP molecules (one ATP per subunit). Forms an heterooctamer with ABCC8/SUR1; one KCNJ11 homotetramer interacts with four ABCC8/SUR1 molecules. Interacts with ABCC9/SUR2. Phosphorylation by MAPK1 results in changes in channel gating that destabilize the closed states and reduce the ATP sensitivity.

It localises to the membrane. It carries out the reaction K(+)(in) = K(+)(out). Its activity is regulated as follows. KATP channels are regulated by cytoplasmic ATP/ADP ratios; ATP inhibits the channel by closing the pore, while ADP activates the channel. Activated by phosphatidylinositol 4,5-biphosphate (PtdIns(4,5)P2). Its function is as follows. Inward rectifier potassium channel that forms the pore of ATP-sensitive potassium channels (KATP), regulating potassium permeability as a function of cytoplasmic ATP and ADP concentrations in many different cells. Inward rectifier potassium channels are characterized by a greater tendency to allow potassium to flow into the cell rather than out of it. Their voltage dependence is regulated by the concentration of extracellular potassium; as external potassium is raised, the voltage range of the channel opening shifts to more positive voltages. The inward rectification is mainly due to the blockage of outward current by internal magnesium. Can be blocked by extracellular barium. In pancreatic cells, it forms KATP channels with ABCC8/SUR1. Can form cardiac and smooth muscle-type KATP channels with ABCC9. In Mus musculus (Mouse), this protein is ATP-sensitive inward rectifier potassium channel 11 (Kcnj11).